Consider the following 240-residue polypeptide: Ribosomal RNA small subunit methyltransferase G (240 aa).

S-adenosyl-L-methionine-binding positions include glycine 80, phenylalanine 85, 131 to 132 (AE), and arginine 150.

The protein belongs to the methyltransferase superfamily. RNA methyltransferase RsmG family.

The protein localises to the cytoplasm. Specifically methylates the N7 position of a guanine in 16S rRNA. In Dictyoglomus thermophilum (strain ATCC 35947 / DSM 3960 / H-6-12), this protein is Ribosomal RNA small subunit methyltransferase G.